The chain runs to 147 residues: Myoglobin (147 aa).

Positions 2 to 141 (ADFDMVLKCW…IIADMEADYK (140 aa)) constitute a Globin domain. H60 contacts nitrite. H60 contacts O2. Heme b is bound at residue H89.

The protein belongs to the globin family. In terms of assembly, monomeric.

It localises to the cytoplasm. The protein resides in the sarcoplasm. It carries out the reaction Fe(III)-heme b-[protein] + nitric oxide + H2O = Fe(II)-heme b-[protein] + nitrite + 2 H(+). The catalysed reaction is H2O2 + AH2 = A + 2 H2O. Monomeric heme protein which primary function is to store oxygen and facilitate its diffusion within muscle tissues. Reversibly binds oxygen through a pentacoordinated heme iron and enables its timely and efficient release as needed during periods of heightened demand. Depending on the oxidative conditions of tissues and cells, and in addition to its ability to bind oxygen, it also has a nitrite reductase activity whereby it regulates the production of bioactive nitric oxide. Under stress conditions, like hypoxia and anoxia, it also protects cells against reactive oxygen species thanks to its pseudoperoxidase activity. The protein is Myoglobin (mb) of Pseudochaenichthys georgianus (South Georgia icefish).